Reading from the N-terminus, the 83-residue chain is RNA-binding protein Hfq (83 aa).

The 60-residue stretch at 9–68 (DPYLNILRKERIPVSIFLVNGIKLQGQIESFDQFVILLRNTVSQMVYKHAISTVVPSRNV) folds into the Sm domain.

This sequence belongs to the Hfq family. In terms of assembly, homohexamer.

RNA chaperone that binds small regulatory RNA (sRNAs) and mRNAs to facilitate mRNA translational regulation in response to envelope stress, environmental stress and changes in metabolite concentrations. Also binds with high specificity to tRNAs. The protein is RNA-binding protein Hfq of Chromohalobacter salexigens (strain ATCC BAA-138 / DSM 3043 / CIP 106854 / NCIMB 13768 / 1H11).